Reading from the N-terminus, the 246-residue chain is Protein DEHYDRATION-INDUCED 19 homolog 3 (246 aa).

The interval 185 to 230 (ERSKAPVPIPDDTSIHKDTPAQPWESRIDSSLTSEEREQKRKQATD) is disordered. Over residues 218-229 (SEEREQKRKQAT) the composition is skewed to basic and acidic residues.

It belongs to the Di19 family.

The protein is Protein DEHYDRATION-INDUCED 19 homolog 3 (DI19-3) of Oryza sativa subsp. japonica (Rice).